The primary structure comprises 417 residues: Tol-Pal system protein TolB (417 aa).

The N-terminal stretch at 1–16 is a signal peptide; the sequence is MRYLWLFLIGTIGLFA.

The protein belongs to the TolB family. As to quaternary structure, the Tol-Pal system is composed of five core proteins: the inner membrane proteins TolA, TolQ and TolR, the periplasmic protein TolB and the outer membrane protein Pal. They form a network linking the inner and outer membranes and the peptidoglycan layer.

The protein resides in the periplasm. In terms of biological role, part of the Tol-Pal system, which plays a role in outer membrane invagination during cell division and is important for maintaining outer membrane integrity. The sequence is that of Tol-Pal system protein TolB from Helicobacter pylori (strain HPAG1).